We begin with the raw amino-acid sequence, 416 residues long: 3-oxoacyl-[acyl-carrier-protein] synthase 1 (416 aa).

Residues 11 to 415 form the Ketosynthase family 3 (KS3) domain; that stretch reads FPSVVVTAVT…GHNVALAFGR (405 aa). Residues Cys-171, His-311, and His-345 each act as for beta-ketoacyl synthase activity in the active site. Residues His-311 and His-345 each contribute to the substrate site.

The protein belongs to the thiolase-like superfamily. Beta-ketoacyl-ACP synthases family.

It localises to the cytoplasm. It catalyses the reaction an ultra-long-chain mono-unsaturated fatty acyl-[ACP] + malonyl-[ACP] + H(+) = a 3-oxo-ultra-long-chain mono-unsaturated fatty acyl-[ACP] + holo-[ACP] + CO2. It participates in lipid metabolism; mycolic acid biosynthesis. Its function is as follows. Part of the mycobacterial fatty acid elongation system FAS-II, which is involved in mycolic acid biosynthesis. Catalyzes the elongation of long chain acyl-ACP substrates by the addition of two carbons from malonyl-ACP to an acyl acceptor. Involved in the initial extension of the mycolate chain and forms monounsaturated fatty acids that averaged 40 carbons in length. This chain is 3-oxoacyl-[acyl-carrier-protein] synthase 1 (kasA), found in Mycobacterium tuberculosis (strain ATCC 35801 / TMC 107 / Erdman).